The following is a 283-amino-acid chain: Mitochondrial outer membrane protein porin (283 aa).

It belongs to the eukaryotic mitochondrial porin family.

It is found in the mitochondrion outer membrane. Its function is as follows. Forms a channel through the cell membrane that allows diffusion of small hydrophilic molecules. The channel adopts an open conformation at low or zero membrane potential and a closed conformation at potentials above 30-40 mV. The open state has a weak anion selectivity whereas the closed state is cation-selective. This Neurospora crassa (strain ATCC 24698 / 74-OR23-1A / CBS 708.71 / DSM 1257 / FGSC 987) protein is Mitochondrial outer membrane protein porin.